Here is a 427-residue protein sequence, read N- to C-terminus: MESLTLQPIARVDGTINLPGSKSVSNRALLLAALAHGKTVLTNLLDSDDVRHMLNALAALGVSYTLSADRTRCEIIGNGGPLHAEGALELFLGNAGTAMRPLAAALCLGSNDIVLTGEPRMKERPIGHLVDALRLGGAKITYLEQENYPPLRLQGGFTGGNVEVDGSVSSQFLTALLMTAPLAPEDTVIRIKGDLVSKPYIDITLNLMKTFGVEIENQHYQQFVVKGGQSYQSPGTYLVEGDASSASYFLAAAAIKGGTVKVTGIGRNSMQGDIRFADVLEKMGATICWGDDYISCTRGELNAIDMDMNHIPDAAMTIATAALFAKGTTTLRNIYNWRVKETDRLFAMATELRKVGAEVEEGHDYIRITPPEKLNFAEIATYNDHRMAMCFSLVALSDTAVTILDPKCTAKTFPDYFEQLARISQPG.

Lys-22, Ser-23, and Arg-27 together coordinate 3-phosphoshikimate. Phosphoenolpyruvate is bound at residue Lys-22. Gly-96 and Arg-124 together coordinate phosphoenolpyruvate. Ser-169, Ser-170, Gln-171, Ser-197, Asp-313, Asn-336, and Lys-340 together coordinate 3-phosphoshikimate. Phosphoenolpyruvate is bound at residue Gln-171. Catalysis depends on Asp-313, which acts as the Proton acceptor. Arg-344, Arg-386, and Lys-411 together coordinate phosphoenolpyruvate.

Belongs to the EPSP synthase family. Monomer.

The protein resides in the cytoplasm. The enzyme catalyses 3-phosphoshikimate + phosphoenolpyruvate = 5-O-(1-carboxyvinyl)-3-phosphoshikimate + phosphate. The protein operates within metabolic intermediate biosynthesis; chorismate biosynthesis; chorismate from D-erythrose 4-phosphate and phosphoenolpyruvate: step 6/7. Catalyzes the transfer of the enolpyruvyl moiety of phosphoenolpyruvate (PEP) to the 5-hydroxyl of shikimate-3-phosphate (S3P) to produce enolpyruvyl shikimate-3-phosphate and inorganic phosphate. The chain is 3-phosphoshikimate 1-carboxyvinyltransferase from Escherichia coli O17:K52:H18 (strain UMN026 / ExPEC).